A 178-amino-acid polypeptide reads, in one-letter code: Large ribosomal subunit protein uL6 (178 aa).

It belongs to the universal ribosomal protein uL6 family. As to quaternary structure, part of the 50S ribosomal subunit.

Functionally, this protein binds to the 23S rRNA, and is important in its secondary structure. It is located near the subunit interface in the base of the L7/L12 stalk, and near the tRNA binding site of the peptidyltransferase center. The sequence is that of Large ribosomal subunit protein uL6 from Streptococcus suis (strain 05ZYH33).